We begin with the raw amino-acid sequence, 212 residues long: Methylthioribulose-1-phosphate dehydratase (212 aa).

Zn(2+)-binding residues include H98 and H100.

Belongs to the aldolase class II family. MtnB subfamily. Zn(2+) serves as cofactor.

It catalyses the reaction 5-(methylsulfanyl)-D-ribulose 1-phosphate = 5-methylsulfanyl-2,3-dioxopentyl phosphate + H2O. It participates in amino-acid biosynthesis; L-methionine biosynthesis via salvage pathway; L-methionine from S-methyl-5-thio-alpha-D-ribose 1-phosphate: step 2/6. Its function is as follows. Catalyzes the dehydration of methylthioribulose-1-phosphate (MTRu-1-P) into 2,3-diketo-5-methylthiopentyl-1-phosphate (DK-MTP-1-P). The polypeptide is Methylthioribulose-1-phosphate dehydratase (Picosynechococcus sp. (strain ATCC 27264 / PCC 7002 / PR-6) (Agmenellum quadruplicatum)).